Reading from the N-terminus, the 429-residue chain is MSQLRATKPGILVCAAIGIFVFLYLRNPTSEDPEEGPTHPAVVECGFYPDELCSALFEGKEAALQIAKFCKDPHGSEIVARLHRPGNCSRISRELHFITRPLSAEEGTFPLAYIVTIHKELALFVQLLRAIYLPQNVYCIHVDAKAPKKYKTAVQSLVNCFENIFISSKREKVAYTGFRRLQAEINCMKDLVHSKFQWSHVINLCGQDFPIKTNKDIIRYIRSKWNDKNITPGVIQPPSNKSKTSQTHREFTPEGNIYASPNERFRDDPPHNLTIYFGSASYVLTRKFVEFVLTDTRAKDMLRWSQDIHGPERHYWVTLNRLKDAPGSTPNAGWEGNVRAVKWRSEEGTVRDGCKGRYVQDSCVYGPGDLPWIIQSPSLFASQFDSAEPLVVTCLERWHRLRVLGQAEVPEEPHWHFQRESHLNRRLNP.

Topologically, residues 1 to 8 are cytoplasmic; sequence MSQLRATK. A helical; Signal-anchor for type II membrane protein transmembrane segment spans residues 9–25; it reads PGILVCAAIGIFVFLYL. Over 26–429 the chain is Extracellular; that stretch reads RNPTSEDPEE…ESHLNRRLNP (404 aa). 4 cysteine pairs are disulfide-bonded: Cys53/Cys205, Cys139/Cys354, Cys160/Cys187, and Cys363/Cys394. An N-linked (GlcNAc...) asparagine glycan is attached at Asn87. N-linked (GlcNAc...) asparagine glycosylation is present at Asn272.

It belongs to the glycosyltransferase 14 family.

It localises to the golgi apparatus membrane. It functions in the pathway protein modification; protein glycosylation. Functionally, probable glycosyltransferase. In Sus scrofa (Pig), this protein is Probable beta-1,3-galactosyl-O-glycosyl-glycoprotein beta-1,6-N-acetylglucosaminyltransferase 7.